We begin with the raw amino-acid sequence, 142 residues long: ER-derived vesicles protein ERV15 (142 aa).

Over 1-7 (MSGTGLS) the chain is Cytoplasmic. A helical transmembrane segment spans residues 8-28 (LFVTGLILNCLNSICQIYFTI). The Extracellular portion of the chain corresponds to 29 to 55 (LYGDLEADYINSIELCKRVNRLSVPEA). A helical transmembrane segment spans residues 56-76 (ILQAFISALFLFNGYWFVFLL). Topologically, residues 77 to 114 (NVPVLAYNASKVYKKTHLLDATDIFRKLGRCKIECFLK) are cytoplasmic. A helical membrane pass occupies residues 115–135 (LGFYLLIFFFYFYRMVTALLE). The Extracellular segment spans residues 136–142 (NDANLIS).

It belongs to the cornichon family.

The protein localises to the membrane. This Saccharomyces cerevisiae (strain ATCC 204508 / S288c) (Baker's yeast) protein is ER-derived vesicles protein ERV15 (ERV15).